A 622-amino-acid chain; its full sequence is Mitochondrial Rho GTPase 2 (622 aa).

The Cytoplasmic segment spans residues Met-1–Arg-596. In terms of domain architecture, Miro 1 spans Arg-2 to His-168. Gly-16, Lys-17, Thr-18, and Ser-19 together coordinate GTP. Thr-18 is a binding site for Mg(2+). Asp-57 lines the Mg(2+) pocket. Ser-59 is a binding site for GTP. A Glycyl lysine isopeptide (Lys-Gly) (interchain with G-Cter in ubiquitin) cross-link involves residue Lys-96. The GTP site is built by Asn-118, Lys-119, Asp-121, Ala-149, and Lys-150. A Glycyl lysine isopeptide (Lys-Gly) (interchain with G-Cter in ubiquitin) cross-link involves residue Lys-119. Residue Lys-164 forms a Glycyl lysine isopeptide (Lys-Gly) (interchain with G-Cter in ubiquitin) linkage. 2 consecutive EF-hand domains span residues Ala-184–His-219 and Arg-304–Ala-339. Ca(2+) is bound by residues Asp-197, Asp-199, Asp-201, Glu-208, Asp-317, Asp-319, Asp-321, and Glu-328. A Miro 2 domain is found at Arg-415–Phe-580. Residues Gly-427, Gly-429, Lys-430, Ser-431, and Ala-432 each contribute to the GTP site. Ser-431 contributes to the Mg(2+) binding site. Residue Glu-475 participates in Mg(2+) binding. 3 residues coordinate GTP: Lys-529, Asp-531, and Cys-560. Residues Gly-597 to Val-619 traverse the membrane as a helical; Anchor for type IV membrane protein segment. The Mitochondrial intermembrane segment spans residues Lys-620–Arg-622.

The protein belongs to the mitochondrial Rho GTPase family. Homodimer. Interacts with the kinesin-binding proteins TRAK1/OIP106 and TRAK2/GRIF1, forming a link between mitochondria and the trafficking apparatus of the microtubules. Interacts with ARMCX3. Found in a complex with KIF5B, OGT, RHOT1 and TRAK1. Ubiquitinated by PRKN in a PINK1-dependent manner, leading to its degradation.

Its subcellular location is the mitochondrion outer membrane. The catalysed reaction is GTP + H2O = GDP + phosphate + H(+). The enzyme catalyses ATP + H2O = ADP + phosphate + H(+). It catalyses the reaction UTP + H2O = UDP + phosphate + H(+). Its function is as follows. Atypical mitochondrial nucleoside-triphosphatase (NTPase) involved in mitochondrial trafficking. Probably involved in control of anterograde transport of mitochondria and their subcellular distribution. Can hydrolyze GTP, ATP and UTP. This is Mitochondrial Rho GTPase 2 (Rhot2) from Rattus norvegicus (Rat).